Reading from the N-terminus, the 130-residue chain is Blasticidin-S deaminase (130 aa).

Positions 1–129 (MPLSQEESTL…ELLPSGYVWE (129 aa)) constitute a CMP/dCMP-type deaminase domain. Ser-28 provides a ligand contact to substrate. Cys-54 is a binding site for Zn(2+). The Proton donor role is filled by Glu-56. Arg-82 provides a ligand contact to substrate. Zn(2+) is bound by residues Cys-88 and Cys-91. Substrate-binding residues include Tyr-126 and Trp-128.

The protein belongs to the cytidine and deoxycytidylate deaminase family. In terms of assembly, homotetramer. It depends on Zn(2+) as a cofactor.

It carries out the reaction blasticidin S + H2O + H(+) = deaminohydroxyblasticidin S + NH4(+). In terms of biological role, catalyzes the deamination of the cytosine moiety of the antibiotics blasticidin S, cytomycin and acetylblasticidin S. This Aspergillus terreus protein is Blasticidin-S deaminase (bsd).